Here is a 649-residue protein sequence, read N- to C-terminus: Acetyl-coenzyme A synthetase (649 aa).

Residues 191 to 194 (RGGR), Thr311, and Asn335 contribute to the CoA site. Residues 387-389 (GEP), 411-416 (DTWWQT), Asp500, and Arg515 contribute to the ATP site. Ser523 contacts CoA. Position 526 (Arg526) interacts with ATP. Positions 537, 539, and 542 each coordinate Mg(2+). Residue Arg584 participates in CoA binding. An N6-acetyllysine modification is found at Lys609.

The protein belongs to the ATP-dependent AMP-binding enzyme family. Mg(2+) is required as a cofactor. Post-translationally, acetylated. Deacetylation by the SIR2-homolog deacetylase activates the enzyme.

It catalyses the reaction acetate + ATP + CoA = acetyl-CoA + AMP + diphosphate. Catalyzes the conversion of acetate into acetyl-CoA (AcCoA), an essential intermediate at the junction of anabolic and catabolic pathways. AcsA undergoes a two-step reaction. In the first half reaction, AcsA combines acetate with ATP to form acetyl-adenylate (AcAMP) intermediate. In the second half reaction, it can then transfer the acetyl group from AcAMP to the sulfhydryl group of CoA, forming the product AcCoA. The protein is Acetyl-coenzyme A synthetase of Vibrio cholerae serotype O1 (strain ATCC 39315 / El Tor Inaba N16961).